A 333-amino-acid chain; its full sequence is Nucleoid-associated protein APJL_0454 (333 aa).

Belongs to the YejK family.

It localises to the cytoplasm. Its subcellular location is the nucleoid. The chain is Nucleoid-associated protein APJL_0454 from Actinobacillus pleuropneumoniae serotype 3 (strain JL03).